A 235-amino-acid chain; its full sequence is Casparian strip membrane protein 2 (235 aa).

Over 1-70 (MTSESATVIQ…RSGAEGFRRC (70 aa)) the chain is Cytoplasmic. A helical membrane pass occupies residues 71-91 (LAVIDFLLRVAAFGPTLAAAI). The Extracellular portion of the chain corresponds to 92–118 (STGTADERLSVFTNFFQFHARFDDFPA). The helical transmembrane segment at 119–139 (FTFFLVANAVAAGYLVLSLPF) threads the bilayer. Over 140–162 (SVVVILRPNKATGGVRLLLLLCD) the chain is Cytoplasmic. Residues 163-183 (VLIMALLTAAGAAAAAIVYVA) traverse the membrane as a helical segment. The Extracellular segment spans residues 184–210 (HSGNRRANWVPICMQFHGFCQRTSGSV). Residues 211 to 231 (VATFLAVLVFIVLILMAACVI) form a helical membrane-spanning segment. The Cytoplasmic segment spans residues 232–235 (RRSK).

This sequence belongs to the Casparian strip membrane proteins (CASP) family. In terms of assembly, homodimer and heterodimers.

The protein resides in the cell membrane. Its function is as follows. Regulates membrane-cell wall junctions and localized cell wall deposition. Required for establishment of the Casparian strip membrane domain (CSD) and the subsequent formation of Casparian strips, a cell wall modification of the root endodermis that determines an apoplastic barrier between the intraorganismal apoplasm and the extraorganismal apoplasm and prevents lateral diffusion. This chain is Casparian strip membrane protein 2, found in Sorghum bicolor (Sorghum).